The sequence spans 240 residues: MNTNKYLAEMIGTFWLTFAGCGSAVIAAGFPQVGIGLVGVSLAFGLSVVTMAYAIGHISGCHLNPAVTLGLAAGGRFPVKQIAPYIIAQVLGAIAAAALLYLIASGAAGFDLAKGFASNGYGAHSPGQYNLVACFVMEVVMTMMFLFVIMGSTHGKAPAGFAPLAIGLALVMIHLVSIPVTNTSVNPARSTGPALFVGGWAIGQLWLFWVAPLLGGVLGGVIYRVLSPEPTGVVEGVKAR.

2 consecutive transmembrane segments (helical) span residues 10–30 (MIGT…AAGF) and 35–55 (IGLV…AYAI). Residues 64 to 66 (NPA) carry the NPA 1 motif. Helical transmembrane passes span 90-110 (VLGA…AAGF), 131-151 (LVAC…VIMG), and 160-180 (GFAP…SIPV). An NPA 2 motif is present at residues 186 to 188 (NPA). The helical transmembrane segment at 202-222 (IGQLWLFWVAPLLGGVLGGVI) threads the bilayer.

Belongs to the MIP/aquaporin (TC 1.A.8) family. Homotetramer.

It is found in the cell inner membrane. The catalysed reaction is H2O(in) = H2O(out). Its function is as follows. Channel that permits osmotically driven movement of water in both directions. It is involved in the osmoregulation and in the maintenance of cell turgor during volume expansion in rapidly growing cells. It mediates rapid entry or exit of water in response to abrupt changes in osmolarity. This is Aquaporin Z from Rhodopseudomonas palustris (strain ATCC BAA-98 / CGA009).